A 207-amino-acid chain; its full sequence is Outer-membrane lipoprotein carrier protein (207 aa).

The N-terminal stretch at 1–21 is a signal peptide; the sequence is MRAIRMLLVSALAMGAVSAHA.

The protein belongs to the LolA family. As to quaternary structure, monomer.

The protein localises to the periplasm. Functionally, participates in the translocation of lipoproteins from the inner membrane to the outer membrane. Only forms a complex with a lipoprotein if the residue after the N-terminal Cys is not an aspartate (The Asp acts as a targeting signal to indicate that the lipoprotein should stay in the inner membrane). This chain is Outer-membrane lipoprotein carrier protein, found in Pseudomonas entomophila (strain L48).